A 223-amino-acid chain; its full sequence is Translation initiation factor 6 (223 aa).

Belongs to the eIF-6 family.

Its function is as follows. Binds to the 50S ribosomal subunit and prevents its association with the 30S ribosomal subunit to form the 70S initiation complex. The polypeptide is Translation initiation factor 6 (Methanobrevibacter smithii (strain ATCC 35061 / DSM 861 / OCM 144 / PS)).